The chain runs to 640 residues: RNA polymerase II elongation factor ELL2 (640 aa).

Disordered stretches follow at residues 172–202 (AVSDTVPERKRSTPMNPANTIRKTHSSSTIS), 290–320 (KLNPSQNAAGTSRSESPVCSSRDAVSSPQKR), and 343–490 (RVPP…EEDL). 2 stretches are compositionally biased toward polar residues: residues 184–202 (TPMNPANTIRKTHSSSTIS) and 291–318 (LNPSQNAAGTSRSESPVCSSRDAVSSPQ). Over residues 360–372 (AAGLPLPPAAAAI) the composition is skewed to low complexity. The span at 391–401 (IVNSNSNSPST) shows a compositional bias: polar residues. A compositionally biased stretch (basic residues) spans 457 to 470 (MSHKKSKKKSKKHK). The segment covering 471–490 (EKDQIKKHDIETIEEKEEDL) has biased composition (basic and acidic residues). A phosphoserine mark is found at Ser-503 and Ser-580. In terms of domain architecture, OCEL spans 526 to 636 (PDYLIKYIAI…LIGEFDQQQA (111 aa)).

This sequence belongs to the ELL/occludin family. As to quaternary structure, component of the super elongation complex (SEC), at least composed of EAF1, EAF2, CDK9, MLLT3/AF9, AFF (AFF1 or AFF4), the P-TEFb complex and ELL (ELL, ELL2 or ELL3). Component of the little elongation complex (LEC), at least composed of ELL (ELL, ELL2 or ELL3), ZC3H8, ICE1 and ICE2. Interacts with AFF4; the interaction is direct and leads to stabilize ELL2 and prevent ELL2 ubiquitination. Interacts with EAF1 and EAF2. Ubiquitinated by SIAH1, leading to its degradation by the proteasome. Interaction with AFF4 stabilizes ELL2 and prevents ELL2 ubiquitination.

The protein localises to the nucleus. In terms of biological role, elongation factor component of the super elongation complex (SEC), a complex required to increase the catalytic rate of RNA polymerase II transcription by suppressing transient pausing by the polymerase at multiple sites along the DNA. Component of the little elongation complex (LEC), a complex required to regulate small nuclear RNA (snRNA) gene transcription by RNA polymerase II and III. Plays a role in immunoglobulin secretion in plasma cells: directs efficient alternative mRNA processing, influencing both proximal poly(A) site choice and exon skipping, as well as immunoglobulin heavy chain (IgH) alternative processing. Probably acts by regulating histone modifications accompanying transition from membrane-specific to secretory IgH mRNA expression. The polypeptide is RNA polymerase II elongation factor ELL2 (ELL2) (Homo sapiens (Human)).